The sequence spans 456 residues: RuvB-like 1 (456 aa).

70–77 serves as a coordination point for ATP; it reads GPPGTGKT.

This sequence belongs to the RuvB family. Forms homohexameric rings. Can form a dodecamer with ruvbl2 made of two stacked hexameric rings. Is a component of the RNA polymerase II holoenzyme complex. Component of the chromatin-remodeling Ino80 complex. Component of some MLL1/MLL complex.

The protein localises to the nucleus. It localises to the dynein axonemal particle. It carries out the reaction ATP + H2O = ADP + phosphate + H(+). Has single-stranded DNA-stimulated ATPase and ATP-dependent DNA helicase (3' to 5') activity suggesting a role in nuclear processes such as recombination and transcription. Proposed core component of the chromatin remodeling INO80 complex which exhibits DNA- and nucleosome-activated ATPase activity and catalyzes ATP-dependent nucleosome sliding. The protein is RuvB-like 1 (ruvbl1) of Xenopus laevis (African clawed frog).